The following is a 210-amino-acid chain: Cytochrome c biogenesis ATP-binding export protein CcmA (210 aa).

The 204-residue stretch at 4-207 folds into the ABC transporter domain; sequence LAVRDLAVAR…RQSRPAGFNE (204 aa). 36–43 is an ATP binding site; the sequence is GPNGIGKT.

This sequence belongs to the ABC transporter superfamily. CcmA exporter (TC 3.A.1.107) family. In terms of assembly, the complex is composed of two ATP-binding proteins (CcmA) and two transmembrane proteins (CcmB).

It localises to the cell inner membrane. It carries out the reaction heme b(in) + ATP + H2O = heme b(out) + ADP + phosphate + H(+). Functionally, part of the ABC transporter complex CcmAB involved in the biogenesis of c-type cytochromes; once thought to export heme, this seems not to be the case, but its exact role is uncertain. Responsible for energy coupling to the transport system. This is Cytochrome c biogenesis ATP-binding export protein CcmA from Paracoccus denitrificans (strain Pd 1222).